A 163-amino-acid polypeptide reads, in one-letter code: Probable phosphotransferase enzyme IIB component M6_Spy0801 (163 aa).

The region spanning 1-163 (MITQIRVDDR…TKVHLSQLVN (163 aa)) is the PTS EIIB type-4 domain. Residue H13 is the Pros-phosphohistidine intermediate of the active site.

It localises to the cytoplasm. Functionally, the phosphoenolpyruvate-dependent sugar phosphotransferase system (sugar PTS), a major carbohydrate active -transport system, catalyzes the phosphorylation of incoming sugar substrates concomitantly with their translocation across the cell membrane. The sequence is that of Probable phosphotransferase enzyme IIB component M6_Spy0801 from Streptococcus pyogenes serotype M6 (strain ATCC BAA-946 / MGAS10394).